A 368-amino-acid polypeptide reads, in one-letter code: tRNA-cytidine(32) 2-sulfurtransferase (368 aa).

The short motif at 95–100 (SGGKDS) is the PP-loop motif element. [4Fe-4S] cluster-binding residues include C170, C173, and C261.

Belongs to the TtcA family. As to quaternary structure, homodimer. Requires Mg(2+) as cofactor. It depends on [4Fe-4S] cluster as a cofactor.

Its subcellular location is the cytoplasm. The catalysed reaction is cytidine(32) in tRNA + S-sulfanyl-L-cysteinyl-[cysteine desulfurase] + AH2 + ATP = 2-thiocytidine(32) in tRNA + L-cysteinyl-[cysteine desulfurase] + A + AMP + diphosphate + H(+). The protein operates within tRNA modification. Catalyzes the ATP-dependent 2-thiolation of cytidine in position 32 of tRNA, to form 2-thiocytidine (s(2)C32). The sulfur atoms are provided by the cysteine/cysteine desulfurase (IscS) system. The chain is tRNA-cytidine(32) 2-sulfurtransferase from Psychrobacter sp. (strain PRwf-1).